Here is a 166-residue protein sequence, read N- to C-terminus: Bacterial non-heme ferritin (166 aa).

Residues 2–145 (LSKNLLEALN…THINYLTRIG (144 aa)) enclose the Ferritin-like diiron domain. Residues Glu17, Glu50, His53, Glu94, and Gln127 each coordinate Fe cation.

It belongs to the ferritin family. Prokaryotic subfamily.

It is found in the cytoplasm. The catalysed reaction is 4 Fe(2+) + O2 + 6 H2O = 4 iron(III) oxide-hydroxide + 12 H(+). Functionally, iron-storage protein. The sequence is that of Bacterial non-heme ferritin (ftnA) from Staphylococcus aureus (strain USA300).